Reading from the N-terminus, the 219-residue chain is 3,4-dihydroxy-2-butanone 4-phosphate synthase (219 aa).

Residues 37 to 38 (RE), aspartate 42, 150 to 154 (RRGHT), and glutamate 174 contribute to the D-ribulose 5-phosphate site. Glutamate 38 provides a ligand contact to Mg(2+). Residue histidine 153 participates in Mg(2+) binding.

This sequence belongs to the DHBP synthase family. Homodimer. It depends on Mg(2+) as a cofactor. Mn(2+) is required as a cofactor.

It carries out the reaction D-ribulose 5-phosphate = (2S)-2-hydroxy-3-oxobutyl phosphate + formate + H(+). It functions in the pathway cofactor biosynthesis; riboflavin biosynthesis; 2-hydroxy-3-oxobutyl phosphate from D-ribulose 5-phosphate: step 1/1. Functionally, catalyzes the conversion of D-ribulose 5-phosphate to formate and 3,4-dihydroxy-2-butanone 4-phosphate. In Edwardsiella ictaluri (strain 93-146), this protein is 3,4-dihydroxy-2-butanone 4-phosphate synthase.